The primary structure comprises 57 residues: Small ribosomal subunit protein bS21 (57 aa).

It belongs to the bacterial ribosomal protein bS21 family.

The polypeptide is Small ribosomal subunit protein bS21 (Bacillus anthracis (strain A0248)).